Reading from the N-terminus, the 158-residue chain is Endoribonuclease YbeY (158 aa).

Positions 117, 121, and 127 each coordinate Zn(2+).

Belongs to the endoribonuclease YbeY family. The cofactor is Zn(2+).

Its subcellular location is the cytoplasm. Its function is as follows. Single strand-specific metallo-endoribonuclease involved in late-stage 70S ribosome quality control and in maturation of the 3' terminus of the 16S rRNA. This chain is Endoribonuclease YbeY, found in Buchnera aphidicola subsp. Schizaphis graminum (strain Sg).